The sequence spans 361 residues: Peptide chain release factor 1 (361 aa).

Gln-235 carries the N5-methylglutamine modification.

This sequence belongs to the prokaryotic/mitochondrial release factor family. Methylated by PrmC. Methylation increases the termination efficiency of RF1.

It is found in the cytoplasm. In terms of biological role, peptide chain release factor 1 directs the termination of translation in response to the peptide chain termination codons UAG and UAA. The sequence is that of Peptide chain release factor 1 from Xanthomonas campestris pv. campestris (strain B100).